The chain runs to 261 residues: Putative ankyrin repeat protein L99 (261 aa).

ANK repeat units lie at residues 21-50 (KVNPLFMDSIESDNVKEVVKFLNQGVDVHA), 51-80 (HEDYALKYSSFKCNLELVKVLISHGANIHS), 81-110 (DRDLALHYAAQQGCFEVVKYLIKNGANVNA), 112-140 (QNSALIRACDSHHYEMIKYLIDKGANIHA), 142-170 (NNFCLRNSVLHHKWEIFTYLMNNGADINA), 171-203 (DNGAALFIAASDNDISAIIMLNAYNADMCIDNC), and 231-259 (NELKALTYAYNNNQYHVFDYLLSKSNINS).

This Acanthamoeba polyphaga (Amoeba) protein is Putative ankyrin repeat protein L99.